The chain runs to 342 residues: S-adenosylmethionine:tRNA ribosyltransferase-isomerase (342 aa).

Belongs to the QueA family. Monomer.

The protein localises to the cytoplasm. It carries out the reaction 7-aminomethyl-7-carbaguanosine(34) in tRNA + S-adenosyl-L-methionine = epoxyqueuosine(34) in tRNA + adenine + L-methionine + 2 H(+). It participates in tRNA modification; tRNA-queuosine biosynthesis. Transfers and isomerizes the ribose moiety from AdoMet to the 7-aminomethyl group of 7-deazaguanine (preQ1-tRNA) to give epoxyqueuosine (oQ-tRNA). In Listeria monocytogenes serotype 4b (strain F2365), this protein is S-adenosylmethionine:tRNA ribosyltransferase-isomerase.